Consider the following 233-residue polypeptide: Orotidine 5'-phosphate decarboxylase (233 aa).

Residues Asp-13, Lys-35, 62–71 (DLKFHDIPNT), Thr-122, Arg-182, Gln-191, Gly-211, and Arg-212 each bind substrate. Catalysis depends on Lys-64, which acts as the Proton donor.

Belongs to the OMP decarboxylase family. Type 1 subfamily. In terms of assembly, homodimer.

It catalyses the reaction orotidine 5'-phosphate + H(+) = UMP + CO2. The protein operates within pyrimidine metabolism; UMP biosynthesis via de novo pathway; UMP from orotate: step 2/2. Catalyzes the decarboxylation of orotidine 5'-monophosphate (OMP) to uridine 5'-monophosphate (UMP). In Pseudomonas putida (strain W619), this protein is Orotidine 5'-phosphate decarboxylase.